The sequence spans 278 residues: Orotidine 5'-phosphate decarboxylase (278 aa).

Lys-96 functions as the Proton donor in the catalytic mechanism.

The protein belongs to the OMP decarboxylase family. Type 2 subfamily.

The enzyme catalyses orotidine 5'-phosphate + H(+) = UMP + CO2. Its pathway is pyrimidine metabolism; UMP biosynthesis via de novo pathway; UMP from orotate: step 2/2. The polypeptide is Orotidine 5'-phosphate decarboxylase (Salinispora arenicola (strain CNS-205)).